The sequence spans 22 residues: Mu-conotoxin TIIIA (22 aa).

Cystine bridges form between Cys-4–Cys-16, Cys-5–Cys-21, and Cys-11–Cys-22. Residues Pro-8 and Pro-18 each carry the 4-hydroxyproline modification. Residue Cys-22 is modified to Cysteine amide.

Belongs to the conotoxin M superfamily. In terms of tissue distribution, expressed by the venom duct.

Its subcellular location is the secreted. Functionally, mu-conotoxins block voltage-gated sodium channels (Nav). This synthetic toxin reversibly and potently blocks rNav1.4/SCN4A (IC(50) is 9 nM) and rNav1.2/SCN2A (IC(50) is 40 nM). It also moderately blocks rNav1.1/SCN1A, rNav1.3/SCN3A, and rNav1.6/SCN8A. The block of SCN1A and SCN2A is modified when beta-subunits are coexpressed with alpha subunits. Hence, blocks of channels containing beta-1 and beta-3 subunits are more potent (compared to channels without beta subunits), whereas blocks of channels containing beta-2 and beta-4 subunits are less potent (compared to channels without beta subunits). This Conus tulipa (Fish-hunting cone snail) protein is Mu-conotoxin TIIIA.